The primary structure comprises 201 residues: Dimethylsulfoniopropionate lyase DddQ (201 aa).

Positions 130, 134, 136, and 169 each coordinate a divalent metal cation.

This sequence belongs to the non-heme iron-dependent dioxygenase family. Homodimer. Requires a divalent metal cation as cofactor.

It carries out the reaction S,S-dimethyl-beta-propiothetin = acrylate + dimethyl sulfide + H(+). May act as a dimethylsulfoniopropionate (DMSP) in vitro, releasing dimethyl sulfide (DMS). DMS is the principal form by which sulfur is transported from oceans to the atmosphere. The real activity of the protein is however subject to debate and it is unclear whether it constitutes a real dimethylsulfoniopropionate lyase in vivo. This is Dimethylsulfoniopropionate lyase DddQ from Ruegeria pomeroyi (strain ATCC 700808 / DSM 15171 / DSS-3) (Silicibacter pomeroyi).